Reading from the N-terminus, the 251-residue chain is tRNA pseudouridine synthase A (251 aa).

The Nucleophile role is filled by Asp-26. Tyr-98 contributes to the substrate binding site.

It belongs to the tRNA pseudouridine synthase TruA family. As to quaternary structure, homodimer.

The catalysed reaction is uridine(38/39/40) in tRNA = pseudouridine(38/39/40) in tRNA. Functionally, formation of pseudouridine at positions 38, 39 and 40 in the anticodon stem and loop of transfer RNAs. This chain is tRNA pseudouridine synthase A, found in Mycolicibacterium paratuberculosis (strain ATCC BAA-968 / K-10) (Mycobacterium paratuberculosis).